Consider the following 257-residue polypeptide: Flavodoxin/ferredoxin--NADP reductase (257 aa).

Positions 2-110 constitute an FAD-binding FR-type domain; the sequence is NPWINANVLK…EKSFGFFTLD (109 aa). Residues 59–62, Y75, 83–85, and T125 contribute to the FAD site; these read RAYS and KLS. Residues 152 to 153, 182 to 183, R193, 223 to 225, and D229 each bind NADP(+); these read VR, SR, and NPA. 256-257 lines the FAD pocket; sequence YW.

This sequence belongs to the ferredoxin--NADP reductase type 1 family. Requires FAD as cofactor.

It localises to the cytoplasm. The enzyme catalyses 2 reduced [2Fe-2S]-[ferredoxin] + NADP(+) + H(+) = 2 oxidized [2Fe-2S]-[ferredoxin] + NADPH. The catalysed reaction is reduced [flavodoxin] + NADP(+) = oxidized [flavodoxin] + NADPH + 2 H(+). Functionally, transports electrons between flavodoxin or ferredoxin and NADPH. The chain is Flavodoxin/ferredoxin--NADP reductase (fpr) from Buchnera aphidicola subsp. Schizaphis graminum (strain Sg).